Reading from the N-terminus, the 95-residue chain is Aspartyl/glutamyl-tRNA(Asn/Gln) amidotransferase subunit C (95 aa).

It belongs to the GatC family. As to quaternary structure, heterotrimer of A, B and C subunits.

The catalysed reaction is L-glutamyl-tRNA(Gln) + L-glutamine + ATP + H2O = L-glutaminyl-tRNA(Gln) + L-glutamate + ADP + phosphate + H(+). The enzyme catalyses L-aspartyl-tRNA(Asn) + L-glutamine + ATP + H2O = L-asparaginyl-tRNA(Asn) + L-glutamate + ADP + phosphate + 2 H(+). Its function is as follows. Allows the formation of correctly charged Asn-tRNA(Asn) or Gln-tRNA(Gln) through the transamidation of misacylated Asp-tRNA(Asn) or Glu-tRNA(Gln) in organisms which lack either or both of asparaginyl-tRNA or glutaminyl-tRNA synthetases. The reaction takes place in the presence of glutamine and ATP through an activated phospho-Asp-tRNA(Asn) or phospho-Glu-tRNA(Gln). The polypeptide is Aspartyl/glutamyl-tRNA(Asn/Gln) amidotransferase subunit C (Pseudomonas entomophila (strain L48)).